Reading from the N-terminus, the 401-residue chain is DNA replication and repair protein RecF (401 aa).

30 to 37 is a binding site for ATP; it reads GYNGIGKT.

It belongs to the RecF family.

It is found in the cytoplasm. Functionally, the RecF protein is involved in DNA metabolism; it is required for DNA replication and normal SOS inducibility. RecF binds preferentially to single-stranded, linear DNA. It also seems to bind ATP. This Arthrobacter sp. (strain FB24) protein is DNA replication and repair protein RecF.